Consider the following 93-residue polypeptide: UPF0175 protein AF_0100 (93 aa).

It belongs to the UPF0175 family.

The chain is UPF0175 protein AF_0100 from Archaeoglobus fulgidus (strain ATCC 49558 / DSM 4304 / JCM 9628 / NBRC 100126 / VC-16).